Reading from the N-terminus, the 682-residue chain is Cyclic nucleotide-gated cation channel (682 aa).

The interval 1–41 (MTGQAALERSVSSHRLSVRSRLEGEAERAESAISRTDGDDD) is disordered. Over 1 to 136 (MTGQAALERS…EGFVVSQSDD (136 aa)) the chain is Cytoplasmic. The segment covering 20-30 (SRLEGEAERAE) has biased composition (basic and acidic residues). A helical transmembrane segment spans residues 137 to 157 (IYYYWLFFIALASLYNWIMLV). Topologically, residues 158–169 (ARACFDQLQDEN) are extracellular. A helical transmembrane segment spans residues 170–190 (FFLWVGLDYLCDVIYILDTCI). At 191 to 218 (RLRTGYLEQGLLVKDLAKLRDNYIRTLQ) the chain is on the cytoplasmic side. A helical transmembrane segment spans residues 219–239 (FKLDFLSILPTELLFFVTGYV). Over 240 to 272 (PQLRFNRLLRFSRMFEFFDRTETRTNYPNAFRI) the chain is Extracellular. Residues 273–293 (CNLILYILVIIHWNACIYYAI) traverse the membrane as a helical segment. Over 294-311 (SKALGLSSDTWVYSGQNK) the chain is Cytoplasmic. A helical transmembrane segment spans residues 312–332 (TLSFCYVYCFYWSTLTLTTIG). The Extracellular segment spans residues 333-343 (EMPPPVKDEEY). Residues 344–364 (VFVVFDFLVGVLIFATIVGNV) form a helical membrane-spanning segment. The Cytoplasmic segment spans residues 365–682 (GSMIANMNAT…SAETNSEEET (318 aa)). 3',5'-cyclic AMP-binding positions include 455 to 577 (LLVE…QGLL), glutamate 514, and arginine 529. Residues 649–682 (GEHAGVPTHTHADIHAQPETHTRTSAETNSEEET) form a disordered region. The span at 658 to 672 (THADIHAQPETHTRT) shows a compositional bias: basic and acidic residues.

Belongs to the cyclic nucleotide-gated cation channel (TC 1.A.1.5) family. As to expression, olfactory neurons.

The protein resides in the membrane. In terms of biological role, this cyclic nucleotide-gated channel is activated equally well by both cAMP and cGMP. The chain is Cyclic nucleotide-gated cation channel from Ictalurus punctatus (Channel catfish).